The sequence spans 106 residues: ATP-dependent Clp protease adapter protein ClpS (106 aa).

The protein belongs to the ClpS family. As to quaternary structure, binds to the N-terminal domain of the chaperone ClpA.

In terms of biological role, involved in the modulation of the specificity of the ClpAP-mediated ATP-dependent protein degradation. This Sodalis glossinidius (strain morsitans) protein is ATP-dependent Clp protease adapter protein ClpS.